The primary structure comprises 246 residues: Large ribosomal subunit protein uL30-like 1 (246 aa).

Ser-54 is subject to Phosphoserine.

This sequence belongs to the universal ribosomal protein uL30 family.

The chain is Large ribosomal subunit protein uL30-like 1 (RPL7L1) from Pongo abelii (Sumatran orangutan).